The primary structure comprises 151 residues: UPF0102 protein Ava_4800 (151 aa).

The protein belongs to the UPF0102 family.

In Trichormus variabilis (strain ATCC 29413 / PCC 7937) (Anabaena variabilis), this protein is UPF0102 protein Ava_4800.